We begin with the raw amino-acid sequence, 1305 residues long: Contactin-associated protein like 5-3 (1305 aa).

Residues 1-24 form the signal peptide; sequence MDSVPRLNSVFTLVLSGLWHFGLT. In terms of domain architecture, F5/8 type C spans 25–174; sequence ATNYNCDDPL…IGMRVEVYGC (150 aa). Topologically, residues 25 to 1235 are extracellular; it reads ATNYNCDDPL…EPLTNAVPSD (1211 aa). Laminin G-like domains follow at residues 180-360 and 367-544; these read VADF…TFSC and PITF…IDLC. The N-linked (GlcNAc...) asparagine glycan is linked to Asn282. A disulfide bridge connects residues Cys329 and Cys360. Asn496 carries an N-linked (GlcNAc...) asparagine glycan. Disulfide bonds link Cys512-Cys544, Cys550-Cys561, and Cys555-Cys570. One can recognise an EGF-like 1 domain in the interval 546–583; that stretch reads IKDRCLPNYCEHGGQCAQTWTNFYCNCSDTGYTGATCH. An N-linked (GlcNAc...) asparagine glycan is attached at Asn571. Cys572 and Cys582 are joined by a disulfide. Positions 584 to 790 constitute a Fibrinogen C-terminal domain; the sequence is DSIYEQSCEV…LRCYGDRHFW (207 aa). A Laminin G-like 3 domain is found at 791 to 956; it reads NAVSFSTEAS…KVTSGVRPGC (166 aa). 4 disulfide bridges follow: Cys929–Cys956, Cys960–Cys973, Cys967–Cys982, and Cys984–Cys994. The region spanning 957-995 is the EGF-like 2 domain; it reads PGHCSSYGRNCQNGGKCVEKHIGYSCDCTNSPYEGPFCQ. The Laminin G-like 4 domain maps to 1013–1198; sequence QEPYSVTKNT…VQRTLTESSC (186 aa). Residues Asn1023 and Asn1057 are each glycosylated (N-linked (GlcNAc...) asparagine). A disulfide bond links Cys1163 and Cys1198. The helical transmembrane segment at 1236-1256 threads the bilayer; sequence LAVIGGIIAVVTFISFSVIGI. Residues 1257 to 1305 are Cytoplasmic-facing; sequence MTHFFYQHKRSHYASQMKEKEYPENVDSSSRNDIDLQNTTRECKQEDFI.

The protein belongs to the neurexin family. As to expression, expressed in brain.

Its subcellular location is the membrane. In terms of biological role, may play a role in the correct development and proper functioning of the peripheral and central nervous system and be involved in cell adhesion and intercellular communication. The sequence is that of Contactin-associated protein like 5-3 (Cntnap5c) from Mus musculus (Mouse).